We begin with the raw amino-acid sequence, 104 residues long: Flagellar hook-basal body complex protein FliE (104 aa).

It belongs to the FliE family.

The protein localises to the bacterial flagellum basal body. This Pectobacterium carotovorum subsp. carotovorum (strain PC1) protein is Flagellar hook-basal body complex protein FliE.